The chain runs to 542 residues: CTP synthase (542 aa).

Positions 1–265 (MARYVFITGG…DDEVLAAFGI (265 aa)) are amidoligase domain. Serine 13 contributes to the CTP binding site. Position 13 (serine 13) interacts with UTP. ATP contacts are provided by residues 14 to 19 (SLGKGI) and aspartate 71. The Mg(2+) site is built by aspartate 71 and glutamate 139. CTP is bound by residues 146-148 (DIE), 186-191 (KTKPTQ), and lysine 222. Residues 186 to 191 (KTKPTQ) and lysine 222 each bind UTP. In terms of domain architecture, Glutamine amidotransferase type-1 spans 291–541 (TIAIVGKYTG…IEAATEQSRL (251 aa)). Glycine 353 contacts L-glutamine. The active-site Nucleophile; for glutamine hydrolysis is cysteine 380. L-glutamine is bound by residues 381 to 384 (FGMQ), glutamate 404, and arginine 469. Active-site residues include histidine 514 and glutamate 516.

Belongs to the CTP synthase family. Homotetramer.

It catalyses the reaction UTP + L-glutamine + ATP + H2O = CTP + L-glutamate + ADP + phosphate + 2 H(+). It carries out the reaction L-glutamine + H2O = L-glutamate + NH4(+). The catalysed reaction is UTP + NH4(+) + ATP = CTP + ADP + phosphate + 2 H(+). The protein operates within pyrimidine metabolism; CTP biosynthesis via de novo pathway; CTP from UDP: step 2/2. Allosterically activated by GTP, when glutamine is the substrate; GTP has no effect on the reaction when ammonia is the substrate. The allosteric effector GTP functions by stabilizing the protein conformation that binds the tetrahedral intermediate(s) formed during glutamine hydrolysis. Inhibited by the product CTP, via allosteric rather than competitive inhibition. Functionally, catalyzes the ATP-dependent amination of UTP to CTP with either L-glutamine or ammonia as the source of nitrogen. Regulates intracellular CTP levels through interactions with the four ribonucleotide triphosphates. The protein is CTP synthase of Rhizobium etli (strain CIAT 652).